We begin with the raw amino-acid sequence, 141 residues long: Zinc finger HIT domain-containing protein 3 (141 aa).

The segment at 1–28 (LEKPKYRCPACRVPYCSVACFRKHKEQC) adopts an HIT-type; degenerate zinc-finger fold. Positions 8, 11, 24, and 28 each coordinate Zn(2+). The residue at position 66 (serine 66) is a Phosphoserine.

Thyroid receptor interacting proteins (TRIPs) specifically interact with the ligand binding domain of the thyroid receptor (TR). Requires the presence of thyroid hormone for its interaction. Interacts with NUFIP1. Interacts (via HIT-type zinc finger) with the RUVBL1/RUVBL2 complex in the presence of ADP.

Its subcellular location is the cytoplasm. It is found in the nucleus. In Pan troglodytes (Chimpanzee), this protein is Zinc finger HIT domain-containing protein 3 (ZNHIT3).